We begin with the raw amino-acid sequence, 945 residues long: Leucine--tRNA ligase (945 aa).

The 'HIGH' region signature appears at 43–53 (PYPNGAIHIGH). The short motif at 638 to 642 (KMSKS) is the 'KMSKS' region element. An ATP-binding site is contributed by Lys641.

The protein belongs to the class-I aminoacyl-tRNA synthetase family.

The protein resides in the cytoplasm. The catalysed reaction is tRNA(Leu) + L-leucine + ATP = L-leucyl-tRNA(Leu) + AMP + diphosphate. The chain is Leucine--tRNA ligase from Pyrobaculum arsenaticum (strain DSM 13514 / JCM 11321 / PZ6).